A 367-amino-acid chain; its full sequence is Apurinic-apyrimidinic endonuclease 1 (367 aa).

Zn(2+) is bound by residues His83, His123, Glu158, Asp192, His195, His229, Asp242, His244, and Glu274. The segment at 312-367 is disordered; the sequence is DTLQKLGAKSRKEQLDKFEVKQKKRAGGTKRKKATAEPSDNDILSQMTKKRKTKKE. Residues 321–332 are compositionally biased toward basic and acidic residues; the sequence is SRKEQLDKFEVK. Positions 333–344 are enriched in basic residues; sequence QKKRAGGTKRKK. At Ser356 the chain carries Phosphoserine.

Belongs to the AP endonuclease 2 family. As to quaternary structure, monomer. Zn(2+) serves as cofactor.

It is found in the nucleus. Functionally, DNA repair enzyme that cleaves apurinic/apyrimidinic (AP) sites and removes 3'-blocking groups present at single strand breaks of damaged DNA. APN1 accounts for &gt; 97% of both apurinic/apyrimidinic (AP) endonuclease and DNA 3'-repair diesterase activities. The chain is Apurinic-apyrimidinic endonuclease 1 (APN1) from Saccharomyces cerevisiae (strain ATCC 204508 / S288c) (Baker's yeast).